Consider the following 208-residue polypeptide: Uracil phosphoribosyltransferase (208 aa).

5-phospho-alpha-D-ribose 1-diphosphate is bound by residues Arg-78, Arg-103, and 130-138 (DPMLATGGS). Residues Ile-193 and 198-200 (GDA) contribute to the uracil site. Asp-199 provides a ligand contact to 5-phospho-alpha-D-ribose 1-diphosphate.

The protein belongs to the UPRTase family. It depends on Mg(2+) as a cofactor.

The enzyme catalyses UMP + diphosphate = 5-phospho-alpha-D-ribose 1-diphosphate + uracil. It participates in pyrimidine metabolism; UMP biosynthesis via salvage pathway; UMP from uracil: step 1/1. Allosterically activated by GTP. Functionally, catalyzes the conversion of uracil and 5-phospho-alpha-D-ribose 1-diphosphate (PRPP) to UMP and diphosphate. The sequence is that of Uracil phosphoribosyltransferase from Pasteurella multocida (strain Pm70).